Here is a 567-residue protein sequence, read N- to C-terminus: Monodechloroaminopyrrolnitrin halogenase PrnC (567 aa).

The protein operates within antibiotic biosynthesis. Involved in the biosynthesis of the antifungal antibiotic pyrrolnitrin. Catalyzes the chlorination of monodechloroaminopyrrolnitrin (MDA) at the 3 position to form aminopyrrolnitrin (APRN). This chain is Monodechloroaminopyrrolnitrin halogenase PrnC (prnC), found in Pseudomonas fluorescens.